Reading from the N-terminus, the 383-residue chain is uncharacterized protein (383 aa).

Transmembrane regions (helical) follow at residues 25-45 (LWVA…PAVA), 53-73 (IYNV…PIMV), 103-123 (FTMV…LLTA), 139-159 (IAGC…MWGY), 166-186 (GLTL…YAPL), 200-220 (WQTI…AGIY), 238-258 (FLHY…ILLF), 272-292 (IFLI…ITYV), 309-329 (LIGA…LFGL), and 332-352 (GAAL…LMLV).

It belongs to the arsenical resistance-3 (ACR3) (TC 2.A.59) family.

It is found in the cell membrane. This is an uncharacterized protein from Synechocystis sp. (strain ATCC 27184 / PCC 6803 / Kazusa).